The primary structure comprises 167 residues: MICCDKVLSSVQSMPVIDKCSVTKCLQTAKQAVVLALSLFAVFASGSLSILSAAVLFSGTAAVLPYLLILTTALLGCVYAVIVLLRSLSAVVQSCKKRSPEEIEGAARPSDQQESGGRLSEESASPQASPTSSTLRLESAFRSIGDSVSGAFDDINKDNSRSRSRSF.

2 helical membrane passes run 33-57 (VVLA…AVLF) and 63-88 (VLPY…LRSL). The interval 94–167 (SCKKRSPEEI…DNSRSRSRSF (74 aa)) is sufficient for interaction with human 14-3-3 beta protein. Positions 97–167 (KRSPEEIEGA…DNSRSRSRSF (71 aa)) are disordered. Low complexity predominate over residues 122-135 (ESASPQASPTSSTL). Positions 161-166 (RSRSRS) match the Phosphorylation-dependent binding motif motif. Ser-166 carries the phosphoserine modification.

In terms of assembly, in infected HeLa cells colocalizes with host 14-3-3 protein (YWHAB); phosphorylation of Ser-166 is probably required. Interacts with Pkn1. Post-translationally, phosphorylated, possibly at more than one position, in infected HeLa cells. Phosphorylated by chlamydial kinase Pnk1.

The protein localises to the secreted. It localises to the host vacuole. Its subcellular location is the host pathogen-containing vacuole. It is found in the host pathogen-containing vacuole membrane. Its function is as follows. Inclusion membrane protein probably involved in early modification events of the chlamydial inclusion. This Chlamydia trachomatis serovar L2 (strain ATCC VR-902B / DSM 19102 / 434/Bu) protein is Inclusion membrane protein G.